We begin with the raw amino-acid sequence, 426 residues long: Enolase (426 aa).

The segment at 32-53 is disordered; sequence TGRAAVPSGASTGAYEAHEQRD. Q163 provides a ligand contact to (2R)-2-phosphoglycerate. E205 functions as the Proton donor in the catalytic mechanism. D242, E285, and D312 together coordinate Mg(2+). (2R)-2-phosphoglycerate contacts are provided by K337, R366, S367, and K388. K337 functions as the Proton acceptor in the catalytic mechanism.

The protein belongs to the enolase family. The cofactor is Mg(2+).

It is found in the cytoplasm. The protein resides in the secreted. The protein localises to the cell surface. It catalyses the reaction (2R)-2-phosphoglycerate = phosphoenolpyruvate + H2O. It participates in carbohydrate degradation; glycolysis; pyruvate from D-glyceraldehyde 3-phosphate: step 4/5. Its function is as follows. Catalyzes the reversible conversion of 2-phosphoglycerate (2-PG) into phosphoenolpyruvate (PEP). It is essential for the degradation of carbohydrates via glycolysis. The sequence is that of Enolase from Hyphomonas neptunium (strain ATCC 15444).